The sequence spans 270 residues: Glucosamine-6-phosphate deaminase (270 aa).

The active-site Proton acceptor; for enolization step is Asp-72. The active-site For ring-opening step is Asp-141. The active-site Proton acceptor; for ring-opening step is the His-143. Glu-148 functions as the For ring-opening step in the catalytic mechanism.

The protein belongs to the glucosamine/galactosamine-6-phosphate isomerase family. NagB subfamily. In terms of assembly, homohexamer.

The catalysed reaction is alpha-D-glucosamine 6-phosphate + H2O = beta-D-fructose 6-phosphate + NH4(+). Its pathway is amino-sugar metabolism; N-acetylneuraminate degradation; D-fructose 6-phosphate from N-acetylneuraminate: step 5/5. Its activity is regulated as follows. Allosterically activated by N-acetylglucosamine 6-phosphate (GlcNAc6P). In terms of biological role, catalyzes the reversible isomerization-deamination of glucosamine 6-phosphate (GlcN6P) to form fructose 6-phosphate (Fru6P) and ammonium ion. This chain is Glucosamine-6-phosphate deaminase, found in Haemophilus influenzae (strain PittEE).